A 78-amino-acid chain; its full sequence is Large ribosomal subunit protein uL29 (78 aa).

A disordered region spans residues 59–78; that stretch reads VESERKRGKSLSSTQTQKEE. The span at 68–78 shows a compositional bias: polar residues; sequence SLSSTQTQKEE.

The protein belongs to the universal ribosomal protein uL29 family.

This is Large ribosomal subunit protein uL29 from Synechococcus sp. (strain JA-3-3Ab) (Cyanobacteria bacterium Yellowstone A-Prime).